Consider the following 280-residue polypeptide: UPF0758 protein Atu1607 (280 aa).

Positions 1 to 22 are disordered; sequence MAKRPALPSADLSPTSGFEAGE. Residues 158–280 form the MPN domain; that stretch reads VLGSWSSVID…HASFKGLRLI (123 aa). Residues His229, His231, and Asp242 each contribute to the Zn(2+) site. The JAMM motif signature appears at 229 to 242; it reads HNHPSGDPTPSRAD.

The protein belongs to the UPF0758 family.

In Agrobacterium fabrum (strain C58 / ATCC 33970) (Agrobacterium tumefaciens (strain C58)), this protein is UPF0758 protein Atu1607.